The primary structure comprises 469 residues: 3-isopropylmalate dehydratase large subunit 1 (469 aa).

Residues C344, C404, and C407 each contribute to the [4Fe-4S] cluster site.

The protein belongs to the aconitase/IPM isomerase family. LeuC type 1 subfamily. As to quaternary structure, heterodimer of LeuC and LeuD. The cofactor is [4Fe-4S] cluster.

The enzyme catalyses (2R,3S)-3-isopropylmalate = (2S)-2-isopropylmalate. Its pathway is amino-acid biosynthesis; L-leucine biosynthesis; L-leucine from 3-methyl-2-oxobutanoate: step 2/4. Functionally, catalyzes the isomerization between 2-isopropylmalate and 3-isopropylmalate, via the formation of 2-isopropylmaleate. This is 3-isopropylmalate dehydratase large subunit 1 from Rubrobacter xylanophilus (strain DSM 9941 / JCM 11954 / NBRC 16129 / PRD-1).